The primary structure comprises 461 residues: CASP-like protein 4U1 (461 aa).

The segment at 1–239 (MASTPRTPAP…RAAETKLPLS (239 aa)) is disordered. Residues 1–314 (MASTPRTPAP…AAVAVGERRE (314 aa)) lie on the Cytoplasmic side of the membrane. Over residues 7–69 (TPAPVRSPPP…PLETPPPPSP (63 aa)) the composition is skewed to pro residues. Low complexity-rich tracts occupy residues 116-126 (LSPMRLAAPRL) and 135-155 (TPTG…AAAG). Positions 193–204 (SPSPSPTPPSPL) are enriched in pro residues. Positions 205 to 221 (TPAAAPVVNNNSNNKNN) are enriched in low complexity. Residues 315–335 (LSVTLRLATAVLSLAAFSVIA) traverse the membrane as a helical segment. Over 336-354 (SARTSGWAGDYYAHHLQYR) the chain is Extracellular. Residues 355 to 375 (YAVAVNVIVCAYSIAQSFGEI) form a helical membrane-spanning segment. Topologically, residues 376–392 (RRLISPRFIFRSMSSYY) are cytoplasmic. A helical transmembrane segment spans residues 393-413 (CSLFLDQALAYLLMSASSAAA). Residues 414–431 (SRNDLWVSRFGTDAFNRK) are Extracellular-facing. Residues 432-452 (ITSALWLSFIAFLMLALNALI) form a helical membrane-spanning segment. At 453-461 (STANLFSML) the chain is on the cytoplasmic side.

This sequence belongs to the Casparian strip membrane proteins (CASP) family. Homodimer and heterodimers.

Its subcellular location is the cell membrane. The chain is CASP-like protein 4U1 from Sorghum bicolor (Sorghum).